The following is a 95-amino-acid chain: Co-chaperonin GroES (95 aa).

Belongs to the GroES chaperonin family. Heptamer of 7 subunits arranged in a ring. Interacts with the chaperonin GroEL.

It localises to the cytoplasm. Together with the chaperonin GroEL, plays an essential role in assisting protein folding. The GroEL-GroES system forms a nano-cage that allows encapsulation of the non-native substrate proteins and provides a physical environment optimized to promote and accelerate protein folding. GroES binds to the apical surface of the GroEL ring, thereby capping the opening of the GroEL channel. The chain is Co-chaperonin GroES from Chlorobaculum parvum (strain DSM 263 / NCIMB 8327) (Chlorobium vibrioforme subsp. thiosulfatophilum).